Reading from the N-terminus, the 61-residue chain is Acetylcholinesterase toxin C (61 aa).

4 disulfides stabilise this stretch: Cys3–Cys22, Cys17–Cys39, Cys41–Cys52, and Cys53–Cys59.

This sequence belongs to the three-finger toxin family. Short-chain subfamily. Acn-esterase inhibitor sub-subfamily. As to expression, expressed by the venom gland.

Its subcellular location is the secreted. Inhibits acetylcholinesterase. The protein is Acetylcholinesterase toxin C of Dendroaspis polylepis polylepis (Black mamba).